A 65-amino-acid polypeptide reads, in one-letter code: Sec-independent protein translocase protein TatA (65 aa).

The chain crosses the membrane as a helical span at residues 1–21; the sequence is MFGLGGQELVLILLIILLLFG.

Belongs to the TatA/E family. Forms a complex with TatC.

Its subcellular location is the cell inner membrane. Functionally, part of the twin-arginine translocation (Tat) system that transports large folded proteins containing a characteristic twin-arginine motif in their signal peptide across membranes. TatA could form the protein-conducting channel of the Tat system. The chain is Sec-independent protein translocase protein TatA from Chlorobium phaeobacteroides (strain DSM 266 / SMG 266 / 2430).